We begin with the raw amino-acid sequence, 141 residues long: Large ribosomal subunit protein uL11 (141 aa).

It belongs to the universal ribosomal protein uL11 family. Part of the ribosomal stalk of the 50S ribosomal subunit. Interacts with L10 and the large rRNA to form the base of the stalk. L10 forms an elongated spine to which L12 dimers bind in a sequential fashion forming a multimeric L10(L12)X complex. Post-translationally, one or more lysine residues are methylated.

In terms of biological role, forms part of the ribosomal stalk which helps the ribosome interact with GTP-bound translation factors. The polypeptide is Large ribosomal subunit protein uL11 (Streptococcus pneumoniae serotype 2 (strain D39 / NCTC 7466)).